The sequence spans 205 residues: MDKRIIVLATKNEGKVREILEILSEYKDQIKTLKELEFDMDLPEETGKSYEENAFIKAKYVAEITGYPVIAEDSGLEIDALQGELGIYSARFGGNVGYKEKISLVLEKMKDTPWEDRKARFICKAVFYDMKEDVKIITGGKVEGYIAYEPKGEKGFGYDPIFYFPLLDKTFGEIDKSEKNKYSHRFLAFSKLKLFLDAYCKGGKI.

A substrate-binding site is contributed by 10 to 15 (TKNEGK). The Mg(2+) site is built by glutamate 44 and aspartate 73. Aspartate 73 functions as the Proton acceptor in the catalytic mechanism. Residues serine 74, 156-159 (FGYD), lysine 179, and 184-185 (HR) contribute to the substrate site.

This sequence belongs to the HAM1 NTPase family. In terms of assembly, homodimer. Requires Mg(2+) as cofactor.

It catalyses the reaction XTP + H2O = XMP + diphosphate + H(+). The enzyme catalyses dITP + H2O = dIMP + diphosphate + H(+). The catalysed reaction is ITP + H2O = IMP + diphosphate + H(+). Functionally, pyrophosphatase that catalyzes the hydrolysis of nucleoside triphosphates to their monophosphate derivatives, with a high preference for the non-canonical purine nucleotides XTP (xanthosine triphosphate), dITP (deoxyinosine triphosphate) and ITP. Seems to function as a house-cleaning enzyme that removes non-canonical purine nucleotides from the nucleotide pool, thus preventing their incorporation into DNA/RNA and avoiding chromosomal lesions. The polypeptide is dITP/XTP pyrophosphatase (Dictyoglomus thermophilum (strain ATCC 35947 / DSM 3960 / H-6-12)).